We begin with the raw amino-acid sequence, 691 residues long: NADH-ubiquinone oxidoreductase 75 kDa subunit (691 aa).

Residues 1–78 (MVNVFVDGLS…NMKIFTNTPL (78 aa)) form the 2Fe-2S ferredoxin-type domain. Cysteine 34, cysteine 45, cysteine 48, and cysteine 62 together coordinate [2Fe-2S] cluster. The 4Fe-4S His(Cys)3-ligated-type domain maps to 78 to 117 (LVKKAREGVLEFLLVNHPLDCPICDQGGECDLQDLTMVYG). [4Fe-4S] cluster is bound by residues histidine 94, cysteine 98, cysteine 101, cysteine 107, cysteine 146, cysteine 149, cysteine 152, and cysteine 196. The 4Fe-4S Mo/W bis-MGD-type domain maps to 215 to 271 (LQSTESIDVSDAIGSNIRIDVRGSEIMRILPRLNEDVNEEWISDKARFCYDGLKRQR).

This sequence belongs to the complex I 75 kDa subunit family. As to quaternary structure, complex I is composed of about 30 different subunits. It depends on [2Fe-2S] cluster as a cofactor. Requires [4Fe-4S] cluster as cofactor.

It localises to the mitochondrion inner membrane. It carries out the reaction a ubiquinone + NADH + 5 H(+)(in) = a ubiquinol + NAD(+) + 4 H(+)(out). In terms of biological role, core subunit of the mitochondrial membrane respiratory chain NADH dehydrogenase (Complex I) that is believed to belong to the minimal assembly required for catalysis. Complex I functions in the transfer of electrons from NADH to the respiratory chain. The immediate electron acceptor for the enzyme is believed to be ubiquinone. This is the largest subunit of complex I and it is a component of the iron-sulfur (IP) fragment of the enzyme. It may form part of the active site crevice where NADH is oxidized. The protein is NADH-ubiquinone oxidoreductase 75 kDa subunit (NAD11) of Reclinomonas americana.